A 387-amino-acid chain; its full sequence is Cell surface GPI-anchored protein ARB_01627 (387 aa).

The N-terminal stretch at 1-19 (MAITKYLVSALAVAGLAFA) is a signal peptide. N-linked (GlcNAc...) asparagine glycans are attached at residues asparagine 73, asparagine 175, asparagine 201, asparagine 206, asparagine 231, asparagine 236, asparagine 253, and asparagine 270. Basic and acidic residues predominate over residues 338–361 (TCRERQEKPKTGDDHSGGDEEGHK). Positions 338 to 362 (TCRERQEKPKTGDDHSGGDEEGHKG) are disordered. Residue alanine 364 is the site of GPI-anchor amidated alanine attachment. Residues 365–387 (AAFAKAPAAALLIAFVGALQFFL) constitute a propeptide, removed in mature form.

This sequence belongs to the SPS2 family. The GPI-anchor is attached to the protein in the endoplasmic reticulum and serves to target the protein to the cell surface. There, the glucosamine-inositol phospholipid moiety is cleaved off and the GPI-modified mannoprotein is covalently attached via its lipidless GPI glycan remnant to the 1,6-beta-glucan of the outer cell wall layer.

Its subcellular location is the cell membrane. It is found in the secreted. The protein localises to the cell wall. In terms of biological role, required for proper cell wall integrity and for the correct assembly of the mannoprotein outer layer of the cell wall. The polypeptide is Cell surface GPI-anchored protein ARB_01627 (Arthroderma benhamiae (strain ATCC MYA-4681 / CBS 112371) (Trichophyton mentagrophytes)).